Consider the following 124-residue polypeptide: Late histone H2B.2.1 (124 aa).

Residues 1-32 (MPAKQTSGKGAKKAGKAKGRPAGASKTRRRKR) are disordered. Positions 10-19 (GAKKAGKAKG) are enriched in basic residues. Serine 111 is a glycosylation site (O-linked (GlcNAc) serine). Residue lysine 119 forms a Glycyl lysine isopeptide (Lys-Gly) (interchain with G-Cter in ubiquitin) linkage.

This sequence belongs to the histone H2B family. As to quaternary structure, the nucleosome is a histone octamer containing two molecules each of H2A, H2B, H3 and H4 assembled in one H3-H4 heterotetramer and two H2A-H2B heterodimers. The octamer wraps approximately 147 bp of DNA. Post-translationally, monoubiquitination of Lys-119 gives a specific tag for epigenetic transcriptional activation and is also prerequisite for histone H3 'Lys-4' and 'Lys-79' methylation. In terms of processing, glcNAcylation at Ser-111 promotes monoubiquitination of Lys-119. It fluctuates in response to extracellular glucose, and associates with transcribed genes.

Its subcellular location is the nucleus. The protein resides in the chromosome. Core component of nucleosome. Nucleosomes wrap and compact DNA into chromatin, limiting DNA accessibility to the cellular machineries which require DNA as a template. Histones thereby play a central role in transcription regulation, DNA repair, DNA replication and chromosomal stability. DNA accessibility is regulated via a complex set of post-translational modifications of histones, also called histone code, and nucleosome remodeling. The polypeptide is Late histone H2B.2.1 (Psammechinus miliaris (Green sea urchin)).